The primary structure comprises 171 residues: Disulfide bond formation protein B (171 aa).

Residues 1 to 8 (MQWSYRFV) lie on the Cytoplasmic side of the membrane. A helical transmembrane segment spans residues 9-25 (SGLLVLASIVGMTFALY). Residues 26-43 (LEHFKGLEPCPLCIFQRV) lie on the Periplasmic side of the membrane. A disulfide bond links Cys-35 and Cys-38. The chain crosses the membrane as a helical span at residues 44 to 60 (GLMAMGIVALIAFLHNP). The Cytoplasmic portion of the chain corresponds to 61-67 (VSNAFKR). A helical membrane pass occupies residues 68–85 (VYAFLATLGILWSVGVAI). The Periplasmic portion of the chain corresponds to 86-142 (RHVWLQTLPPDQVPSCGPGLNYLLDALPLKTVLQQVLQGSGECAAIHWTFLGQSLPV). Cys-101 and Cys-128 are oxidised to a cystine. Residues 143–161 (WSLAYFSLILLVCVWQLLR) traverse the membrane as a helical segment. The Cytoplasmic portion of the chain corresponds to 162 to 171 (RYPVIVTKKK).

It belongs to the DsbB family.

It is found in the cell inner membrane. In terms of biological role, required for disulfide bond formation in some periplasmic proteins. Acts by oxidizing the DsbA protein. This chain is Disulfide bond formation protein B, found in Acinetobacter baylyi (strain ATCC 33305 / BD413 / ADP1).